A 115-amino-acid polypeptide reads, in one-letter code: U3-lycotoxin-Ls1b (115 aa).

Residues 1-20 (MKFVLLFGVLLVTLFSYSSA) form the signal peptide. A propeptide spanning residues 21–44 (EMLDDFDQADEDELLSLIEKEEAR) is cleaved from the precursor. 4 disulfide bridges follow: Cys48–Cys63, Cys55–Cys72, Cys62–Cys87, and Cys74–Cys85.

The protein belongs to the neurotoxin 19 (CSTX) family. 01 subfamily. As to expression, expressed by the venom gland.

It is found in the secreted. This is U3-lycotoxin-Ls1b from Lycosa singoriensis (Wolf spider).